We begin with the raw amino-acid sequence, 52 residues long: MPEQVNCQYDCHCSNCACENTCNCCAKPACACTNSASNECSCQTCKCQTCKC.

Repeats lie at residues 43 to 47 and 48 to 52; these read QTCKC.

Belongs to the metallothionein superfamily. Type 10 family.

The metallothioneins are involved in the cellular sequestration of toxic metal ions. The sequence is that of Metallothionein-2 (MT-II) from Candida glabrata (strain ATCC 2001 / BCRC 20586 / JCM 3761 / NBRC 0622 / NRRL Y-65 / CBS 138) (Yeast).